Here is a 441-residue protein sequence, read N- to C-terminus: Keratin, type I cytoskeletal 17 (441 aa).

Residues 1-23 (MTTTIRHFSSGSIKGSSGLAGGS) are disordered. The head stretch occupies residues 1–91 (MTTTIRHFSS…GGVDGLLVGG (91 aa)). Positions 9–23 (SSGSIKGSSGLAGGS) are enriched in low complexity. The residue at position 12 (S12) is a Phosphoserine. K14 is covalently cross-linked (Glycyl lysine isopeptide (Lys-Gly) (interchain with G-Cter in SUMO1); alternate). K14 participates in a covalent cross-link: Glycyl lysine isopeptide (Lys-Gly) (interchain with G-Cter in SUMO2); alternate. Residues S24, S30, S32, and S37 each carry the phosphoserine modification. Position 42 is a phosphoserine; by RPS6KA1 (S42). The interval 92-128 (EKATMQNLNDRLASYLDKVRALEEANTELELKIRDWY) is coil 1A. An IF rod domain is found at 92-403 (EKATMQNLND…RLLEGEDAHL (312 aa)). Residue T118 is modified to Phosphothreonine. Residues 129 to 146 (QKQAPGPAPDYSSYFKTI) form a linker 1 region. The tract at residues 147–238 (EDLRNKIHTA…NHEEEMKALR (92 aa)) is coil 1B. A linker 12 region spans residues 239 to 258 (GQVGGEINVEMDAAPGVDLS). The segment at 259–400 (RILNEMRDQY…TYRRLLEGED (142 aa)) is coil 2. K286 is covalently cross-linked (Glycyl lysine isopeptide (Lys-Gly) (interchain with G-Cter in SUMO2)). Residue T287 is modified to Phosphothreonine. Phosphoserine is present on S331. Residues 401-441 (AHLTQYKTKEPVTTRQVRTIVEEVQDGRVISSREQVHQTSH) are tail. Glycyl lysine isopeptide (Lys-Gly) (interchain with G-Cter in SUMO1); alternate cross-links involve residues K407 and K409. Glycyl lysine isopeptide (Lys-Gly) (interchain with G-Cter in SUMO2); alternate cross-links involve residues K407 and K409.

It belongs to the intermediate filament family. In terms of assembly, heterodimer of a type I and a type II keratin. KRT17 associates with KRT6 isomers (KRT6A or KRT6B). Interacts with TRADD and SFN. In terms of processing, phosphorylation at Ser-42 occurs in a growth- and stress-dependent fashion in skin keratinocytes, it has no effect on filament organization.

The protein resides in the cytoplasm. Its function is as follows. Type I keratin involved in the formation and maintenance of various skin appendages, specifically in determining shape and orientation of hair. Required for the correct growth of hair follicles, in particular for the persistence of the anagen (growth) state. Modulates the function of TNF-alpha in the specific context of hair cycling. Regulates protein synthesis and epithelial cell growth through binding to the adapter protein SFN and by stimulating Akt/mTOR pathway. Involved in tissue repair. May be a marker of basal cell differentiation in complex epithelia and therefore indicative of a certain type of epithelial 'stem cells'. Acts as a promoter of epithelial proliferation by acting a regulator of immune response in skin: promotes Th1/Th17-dominated immune environment contributing to the development of basaloid skin tumors. May act as an autoantigen in the immunopathogenesis of psoriasis, with certain peptide regions being a major target for autoreactive T-cells and hence causing their proliferation. The protein is Keratin, type I cytoskeletal 17 of Bos taurus (Bovine).